A 588-amino-acid chain; its full sequence is A-type ATP synthase subunit A (588 aa).

237 to 244 contributes to the ATP binding site; that stretch reads GPFGSGKT.

The protein belongs to the ATPase alpha/beta chains family. In terms of assembly, has multiple subunits with at least A(3), B(3), C, D, E, F, H, I and proteolipid K(x).

Its subcellular location is the cell membrane. The catalysed reaction is ATP + H2O + 4 H(+)(in) = ADP + phosphate + 5 H(+)(out). Its function is as follows. Component of the A-type ATP synthase that produces ATP from ADP in the presence of a proton gradient across the membrane. The A chain is the catalytic subunit. The polypeptide is A-type ATP synthase subunit A (Methanoregula boonei (strain DSM 21154 / JCM 14090 / 6A8)).